A 132-amino-acid polypeptide reads, in one-letter code: Anti-sigma-E factor RseA (132 aa).

A Phosphothreonine; by PknB modification is found at threonine 36. Zn(2+)-binding residues include histidine 63, cysteine 67, and cysteine 70. A disordered region spans residues 106-132; it reads RTPEVTPDVSEQAKFADDPTRGRRKRR.

The protein belongs to the zinc-associated anti-sigma factor (ZAS) superfamily. Interacts with ECF RNA polymerase sigma factor SigE, interaction is abrogated by treatment of cells with H(2)O(2), detergent or vancomycin (the latter 2 cause surface stress). This probably inhibits the interaction of SigE with the RNA polymerase catalytic core. Requires Zn(2+) as cofactor. Phosphorylated by PknB on Thr-36; can be dephosphorylated (at least in vitro) by PstP. Phosphorylation is the signal for subsequent degradation by the ClpC1-ClpP2 complex. In terms of processing, degraded following vancomycin treatment (surface stress) by a ClpC1-ClpP2 complex.

The protein resides in the cytoplasm. Functionally, an anti-sigma factor for extracytoplasmic function (ECF) sigma factor SigE. ECF sigma factors are held in an inactive form by an anti-sigma factor. This chain is Anti-sigma-E factor RseA (rseA), found in Mycolicibacterium smegmatis (strain ATCC 700084 / mc(2)155) (Mycobacterium smegmatis).